The following is a 702-amino-acid chain: Ribosomal RNA large subunit methyltransferase K/L (702 aa).

One can recognise a THUMP domain in the interval 43-154 (LVYQSLMWSR…KETASIALDL (112 aa)).

This sequence belongs to the methyltransferase superfamily. RlmKL family.

It is found in the cytoplasm. The catalysed reaction is guanosine(2445) in 23S rRNA + S-adenosyl-L-methionine = N(2)-methylguanosine(2445) in 23S rRNA + S-adenosyl-L-homocysteine + H(+). The enzyme catalyses guanosine(2069) in 23S rRNA + S-adenosyl-L-methionine = N(2)-methylguanosine(2069) in 23S rRNA + S-adenosyl-L-homocysteine + H(+). Functionally, specifically methylates the guanine in position 2445 (m2G2445) and the guanine in position 2069 (m7G2069) of 23S rRNA. This is Ribosomal RNA large subunit methyltransferase K/L from Escherichia coli O1:K1 / APEC.